The chain runs to 199 residues: Probable GTP-binding protein EngB (199 aa).

The EngB-type G domain maps to 28 to 199; that stretch reads DLPEIALAGR…DSWDAILEQV (172 aa). GTP-binding positions include 36-43, 63-67, 81-84, 148-151, and 180-182; these read GRSNVGKS, GKTQL, DVPG, TKAD, and FSS. Residues Ser43 and Thr65 each contribute to the Mg(2+) site.

This sequence belongs to the TRAFAC class TrmE-Era-EngA-EngB-Septin-like GTPase superfamily. EngB GTPase family. The cofactor is Mg(2+).

Its function is as follows. Necessary for normal cell division and for the maintenance of normal septation. The protein is Probable GTP-binding protein EngB of Streptococcus pyogenes serotype M28 (strain MGAS6180).